A 146-amino-acid polypeptide reads, in one-letter code: UPF0260 protein Sden_1632 (146 aa).

Belongs to the UPF0260 family.

The polypeptide is UPF0260 protein Sden_1632 (Shewanella denitrificans (strain OS217 / ATCC BAA-1090 / DSM 15013)).